The primary structure comprises 329 residues: tRNA dimethylallyltransferase (329 aa).

24-31 (GSTGIGKT) provides a ligand contact to ATP. Substrate is bound at residue 26 to 31 (TGIGKT). Residues 49 to 52 (DSMQ) are interaction with substrate tRNA.

The protein belongs to the IPP transferase family. Monomer. Mg(2+) serves as cofactor.

It catalyses the reaction adenosine(37) in tRNA + dimethylallyl diphosphate = N(6)-dimethylallyladenosine(37) in tRNA + diphosphate. In terms of biological role, catalyzes the transfer of a dimethylallyl group onto the adenine at position 37 in tRNAs that read codons beginning with uridine, leading to the formation of N6-(dimethylallyl)adenosine (i(6)A). The polypeptide is tRNA dimethylallyltransferase (Methylacidiphilum infernorum (isolate V4) (Methylokorus infernorum (strain V4))).